We begin with the raw amino-acid sequence, 304 residues long: Dihydroorotate dehydrogenase B (NAD(+)), catalytic subunit (304 aa).

FMN is bound by residues serine 22 and 46 to 47 (KA). Substrate is bound by residues lysine 46 and 70-74 (NAIGL). Asparagine 100 and asparagine 128 together coordinate FMN. Asparagine 128 serves as a coordination point for substrate. Catalysis depends on cysteine 131, which acts as the Nucleophile. Positions 166 and 192 each coordinate FMN. Residue 193-194 (NT) participates in substrate binding. FMN contacts are provided by residues glycine 218, 244–245 (GG), and 266–267 (GT).

Belongs to the dihydroorotate dehydrogenase family. Type 1 subfamily. As to quaternary structure, heterotetramer of 2 PyrK and 2 PyrD type B subunits. The cofactor is FMN.

Its subcellular location is the cytoplasm. It carries out the reaction (S)-dihydroorotate + NAD(+) = orotate + NADH + H(+). Its pathway is pyrimidine metabolism; UMP biosynthesis via de novo pathway; orotate from (S)-dihydroorotate (NAD(+) route): step 1/1. Catalyzes the conversion of dihydroorotate to orotate with NAD(+) as electron acceptor. The chain is Dihydroorotate dehydrogenase B (NAD(+)), catalytic subunit (pyrD) from Fusobacterium nucleatum subsp. nucleatum (strain ATCC 25586 / DSM 15643 / BCRC 10681 / CIP 101130 / JCM 8532 / KCTC 2640 / LMG 13131 / VPI 4355).